A 172-amino-acid polypeptide reads, in one-letter code: Adenine phosphoribosyltransferase (172 aa).

The protein belongs to the purine/pyrimidine phosphoribosyltransferase family. Homodimer.

It localises to the cytoplasm. The enzyme catalyses AMP + diphosphate = 5-phospho-alpha-D-ribose 1-diphosphate + adenine. It functions in the pathway purine metabolism; AMP biosynthesis via salvage pathway; AMP from adenine: step 1/1. In terms of biological role, catalyzes a salvage reaction resulting in the formation of AMP, that is energically less costly than de novo synthesis. This Levilactobacillus brevis (strain ATCC 367 / BCRC 12310 / CIP 105137 / JCM 1170 / LMG 11437 / NCIMB 947 / NCTC 947) (Lactobacillus brevis) protein is Adenine phosphoribosyltransferase.